A 184-amino-acid polypeptide reads, in one-letter code: Cytidylate kinase (184 aa).

Gly-8–Thr-16 contributes to the ATP binding site.

It belongs to the cytidylate kinase family. Type 2 subfamily.

It localises to the cytoplasm. It carries out the reaction CMP + ATP = CDP + ADP. The catalysed reaction is dCMP + ATP = dCDP + ADP. This chain is Cytidylate kinase, found in Pyrobaculum calidifontis (strain DSM 21063 / JCM 11548 / VA1).